A 549-amino-acid chain; its full sequence is ATP synthase subunit alpha (549 aa).

172–179 (GDRKTGKT) provides a ligand contact to ATP. Residues 513-549 (SSTGESVVPDEHVEAMDEEDLGKESVKVKKPAPQKKK) are disordered. The segment covering 540 to 549 (VKKPAPQKKK) has biased composition (basic residues).

It belongs to the ATPase alpha/beta chains family. As to quaternary structure, F-type ATPases have 2 components, CF(1) - the catalytic core - and CF(0) - the membrane proton channel. CF(1) has five subunits: alpha(3), beta(3), gamma(1), delta(1), epsilon(1). CF(0) has three main subunits: a(1), b(2) and c(9-12). The alpha and beta chains form an alternating ring which encloses part of the gamma chain. CF(1) is attached to CF(0) by a central stalk formed by the gamma and epsilon chains, while a peripheral stalk is formed by the delta and b chains.

The protein resides in the cell membrane. The catalysed reaction is ATP + H2O + 4 H(+)(in) = ADP + phosphate + 5 H(+)(out). Produces ATP from ADP in the presence of a proton gradient across the membrane. The alpha chain is a regulatory subunit. This is ATP synthase subunit alpha from Mycobacterium marinum (strain ATCC BAA-535 / M).